The sequence spans 283 residues: Protoheme IX farnesyltransferase 1 (283 aa).

9 consecutive transmembrane segments (helical) span residues 14–34, 35–55, 84–104, 107–127, 133–153, 163–183, 208–228, 231–251, and 258–278; these read IALM…TKVD, PVAL…SAVF, LGFA…NAAF, VVAL…TVWL, TNII…AAAV, VLAL…AILL, ILAN…LGLL, VYGF…VVLV, and WAGW…IAVF.

It belongs to the UbiA prenyltransferase family. Protoheme IX farnesyltransferase subfamily.

It localises to the cell inner membrane. It carries out the reaction heme b + (2E,6E)-farnesyl diphosphate + H2O = Fe(II)-heme o + diphosphate. It participates in porphyrin-containing compound metabolism; heme O biosynthesis; heme O from protoheme: step 1/1. Converts heme B (protoheme IX) to heme O by substitution of the vinyl group on carbon 2 of heme B porphyrin ring with a hydroxyethyl farnesyl side group. This is Protoheme IX farnesyltransferase 1 from Paramagnetospirillum magneticum (strain ATCC 700264 / AMB-1) (Magnetospirillum magneticum).